A 415-amino-acid polypeptide reads, in one-letter code: Membrane-bound ghrelin O-acyltransferase mboat4 (415 aa).

The Lumenal segment spans residues 1 to 6; sequence MIDLLW. A helical membrane pass occupies residues 7-28; the sequence is ISSDGHPQLFYQFINIPFAFLF. The Cytoplasmic segment spans residues 29–42; it reads HCLSSQGHLSIINR. A helical membrane pass occupies residues 43-58; that stretch reads YVYLAMGGFMLAIATM. Residues 59–61 are Lumenal-facing; it reads GPY. Residues 62-78 form a helical membrane-spanning segment; it reads SSLLFLSAIKLLLLIHY. Residues 79 to 84 are Cytoplasmic-facing; that stretch reads IHPMHL. The helical transmembrane segment at 85–103 threads the bilayer; it reads HRWILGLQMCWQTCWHLYV. The Lumenal segment spans residues 104–122; the sequence is QYQIYWLQEAPDSRLLLAI. A helical membrane pass occupies residues 123-138; that stretch reads SALMLMTQRISSLSLD. Residues 139-193 are Cytoplasmic-facing; sequence FQEGTISNQSILIPFLTYSLYFPALLGGPLCSFNAFVQSVERQHTSMTSYLGNLT. Residues 194 to 214 traverse the membrane as a helical segment; sequence SKISQVIVLVWIKQLFSELLK. Residues 215 to 227 lie on the Lumenal side of the membrane; the sequence is SATFNIDSVCLDV. A helical transmembrane segment spans residues 228–247; that stretch reads LWIWIFSLTLRLNYYAHWKM. Residues 248–312 are Cytoplasmic-facing; it reads SECVNNAAGL…RKIVFNRTSR (65 aa). Catalysis depends on residues N295 and H326. Residues 313 to 326 traverse the membrane as a helical segment; the sequence is SPLFMTFGFSALWH. Over 327-328 the chain is Lumenal; it reads GL. Residues 329–345 form a helical membrane-spanning segment; that stretch reads HPGQILGFLIWAVTVQA. Residues 346-364 lie on the Cytoplasmic side of the membrane; the sequence is DYKLHRFSHPKLNSLWRKR. A helical transmembrane segment spans residues 365-385; it reads LYVCVNWAFTQLTVACVVVCV. The Lumenal portion of the chain corresponds to 386–394; sequence ELQSLASVK. Residues 395–415 form a helical membrane-spanning segment; sequence LLWSSCIAVFPLLSALILIIL.

This sequence belongs to the membrane-bound acyltransferase family. As to quaternary structure, monomer. Post-translationally, not glycosylated.

It localises to the endoplasmic reticulum membrane. It catalyses the reaction octanoyl-CoA + L-seryl-[protein] = O-octanoyl-L-seryl-[protein] + CoA. It carries out the reaction decanoyl-CoA + L-seryl-[protein] = O-decanoyl-L-seryl-[protein] + CoA. The enzyme catalyses L-seryl-[protein] + acetyl-CoA = O-acetyl-L-seryl-[protein] + CoA. The catalysed reaction is L-seryl-[protein] + butanoyl-CoA = O-butanoyl-L-seryl-[protein] + CoA. It catalyses the reaction pentanoyl-CoA + L-seryl-[protein] = O-pentanoyl-L-seryl-[protein] + CoA. It carries out the reaction hexanoyl-CoA + L-seryl-[protein] = O-hexanoyl-L-seryl-[protein] + CoA. The enzyme catalyses heptanoyl-CoA + L-seryl-[protein] = O-heptanoyl-L-seryl-[protein] + CoA. The catalysed reaction is nonanoyl-CoA + L-seryl-[protein] = O-nonanoyl-L-seryl-[protein] + CoA. It catalyses the reaction L-seryl-[protein] + dodecanoyl-CoA = O-dodecanoyl-L-seryl-[protein] + CoA. It carries out the reaction L-seryl-[protein] + tetradecanoyl-CoA = O-tetradecanoyl-L-seryl-[protein] + CoA. The enzyme catalyses a fatty acyl-CoA + L-seryl-[protein] = O-fatty acyl-L-seryl-[protein] + CoA. In terms of biological role, catalyzes ghrelin acylation at 'Ser-3' using preferentially octanoyl-CoA, hexanoyl-CoA and decanoyl-CoA as acyl-CoA donors leading to ghrelin activity. In vitro uses also acyl-CoA donors of different lengths from short-chain (C2) to long-chain fatty acids (C16) knowing that acyl-CoA donors from butanoyl-CoA (C4) to dodecanoyl-CoA (C12) are more efficient compared to longer acyl-CoA donors, such as myristoyl-CoA (C14) and palmitoyl-CoA (C16) that are not efficient. This is Membrane-bound ghrelin O-acyltransferase mboat4 from Danio rerio (Zebrafish).